Consider the following 571-residue polypeptide: MQPRHIAELILTGFKKHYLLFQKTTAKAPLAFAKRDWQAINDISRLRISHYDDRVNETTATLRQQQTEQLDEQLWLEVKKLYQHFLCFHPQAELAETFYNSVFCRLYHRRYFHNDFIFVEATLKDAPAVPVEAEYRSYFPVVDGLKPTIKQIINHFDFKAPFVNLERDIRLLVKAFYKQAPDTHHKAWQMRFDILHTPFYRNKAAYIVGRVVSQSGVQPFIIAVLHHEDKGLYLDALLTKSSQMRVIFGFARAYFMVETHAPCALVRFLNQLMPNKTIAELYNAIGFHKQGKTEFYREFLNHLTHSNDEFTIAPGTPGMVMMVFTLPSFGYVFKVIKDKFGESKPFGRDTVLKRYQLVKKHDRVGRMADTIEYSNVVFPLARFDSNLLQQLHQTIGSSMVIEGDWLIIKHLYIERRMTPLNLFLENADDASAADAIEEYGQALKEMIAVNIFPGDMLLKNFGVSKHKRIIFYDYDEVQYLTDMNFRALPKAKTYDDYLMDEQSYSVAPQDVFPEQLCTFVMPNPIYKQFLMSTHPELIDVNFWKQAQQNIKNGQVSHIYPYPTAQRFIHHW.

ATP-binding positions include 313-319 and Lys334; that span reads APGTPGM. The active site involves Asp369.

Belongs to the AceK family.

It is found in the cytoplasm. It carries out the reaction L-seryl-[isocitrate dehydrogenase] + ATP = O-phospho-L-seryl-[isocitrate dehydrogenase] + ADP + H(+). Its function is as follows. Bifunctional enzyme which can phosphorylate or dephosphorylate isocitrate dehydrogenase (IDH) on a specific serine residue. This is a regulatory mechanism which enables bacteria to bypass the Krebs cycle via the glyoxylate shunt in response to the source of carbon. When bacteria are grown on glucose, IDH is fully active and unphosphorylated, but when grown on acetate or ethanol, the activity of IDH declines drastically concomitant with its phosphorylation. The protein is Isocitrate dehydrogenase kinase/phosphatase 2 of Pseudoalteromonas translucida (strain TAC 125).